Here is a 708-residue protein sequence, read N- to C-terminus: Matrix metalloproteinase-9 (708 aa).

An N-terminal signal peptide occupies residues 1–19 (MSPWQPLLLVLLALGYSFA). Residues 20-107 (APHQRQPTYV…PRCGVPDVGK (88 aa)) constitute a propeptide, activation peptide. Asn39 carries an N-linked (GlcNAc...) asparagine glycan. Positions 98–105 (PRCGVPDV) match the Cysteine switch motif. Cys100 contributes to the Zn(2+) binding site. Asn121 carries N-linked (GlcNAc...) asparagine glycosylation. Positions 132 and 166 each coordinate Ca(2+). 2 residues coordinate Zn(2+): His176 and Asp178. Positions 183, 184, 186, and 188 each coordinate Ca(2+). His191 contacts Zn(2+). Gly198, Gln200, and Asp202 together coordinate Ca(2+). His204 lines the Zn(2+) pocket. Positions 206, 207, and 209 each coordinate Ca(2+). 3 Fibronectin type-II domains span residues 226-274 (ANGA…FCPS), 284-332 (GDGK…FCPT), and 343-391 (SAGE…FCPD). Intrachain disulfides connect Cys231–Cys257, Cys245–Cys272, Cys289–Cys315, Cys303–Cys330, Cys348–Cys374, and Cys362–Cys389. His402 lines the Zn(2+) pocket. Glu403 is a catalytic residue. Zn(2+) is bound by residues His406 and His412. The disordered stretch occupies residues 441 to 520 (HHLYGRGSKP…SSTPDDNPCN (80 aa)). Residues 480–490 (PTGGPTVAPTG) show a composition bias toward low complexity. Positions 491–502 (APSPGPTGPPTA) are enriched in pro residues. A disulfide bridge links Cys519 with Cys707. Hemopexin repeat units lie at residues 521-566 (VDVF…WPAF), 567-611 (PSKL…GLGS), 613-660 (VTLV…FSGV), and 661-707 (PWNS…LLQC).

It belongs to the peptidase M10A family. As to quaternary structure, exists as monomer or homodimer; disulfide-linked. Also exists as heterodimer with LCN2. Macrophages and transformed cell lines produce only the monomeric form. Interacts with ECM1. Requires Zn(2+) as cofactor. Ca(2+) is required as a cofactor. In terms of processing, N- and O-glycosylated.

The protein localises to the secreted. It localises to the extracellular space. The protein resides in the extracellular matrix. It catalyses the reaction Cleavage of gelatin types I and V and collagen types IV and V.. Functionally, matrix metalloproteinase that plays an essential role in local proteolysis of the extracellular matrix and in leukocyte migration. Could play a role in bone osteoclastic resorption. Cleaves KiSS1 at a Gly-|-Leu bond. Cleaves NINJ1 to generate the Secreted ninjurin-1 form. Cleaves type IV and type V collagen into large C-terminal three quarter fragments and shorter N-terminal one quarter fragments. Degrades fibronectin but not laminin or Pz-peptide. In Rattus norvegicus (Rat), this protein is Matrix metalloproteinase-9 (Mmp9).